A 419-amino-acid polypeptide reads, in one-letter code: L-rhamnose isomerase (419 aa).

Mn(2+) is bound by residues histidine 262, aspartate 294, and aspartate 296.

It belongs to the rhamnose isomerase family. Homotetramer. The cofactor is Mn(2+).

The protein resides in the cytoplasm. It catalyses the reaction L-rhamnopyranose = L-rhamnulose. The protein operates within carbohydrate degradation; L-rhamnose degradation; glycerone phosphate from L-rhamnose: step 1/3. Its function is as follows. Catalyzes the interconversion of L-rhamnose and L-rhamnulose. The polypeptide is L-rhamnose isomerase (Salmonella choleraesuis (strain SC-B67)).